The following is a 183-amino-acid chain: Copper metallothionein 2 (183 aa).

The interval 1–35 is cys-rich copper-binding 1; sequence MAFNPNPEKTTSCCSTSKAQDKCTCPKGKCECETC. Residues 36–45 are spacer B1; the sequence is PKSTKTPGSG. A cys-rich copper-binding 2 region spans residues 46-79; that stretch reads PCNCGVKEKVSTCGCNGSGAACTCPPGQCACDSC. The tract at residues 80–88 is spacer B2; the sequence is PRKAKSVST. The interval 89–110 is cys-rich copper-binding 3; sequence CGCGGSAAACSCPPGKCACDSC. Residues 111–120 are spacer B3; it reads PKQAQEKVSS. The segment at 121–142 is cys-rich copper-binding 4; sequence CACNGSGGACTCPPGKCSCSGC. The spacer B4 stretch occupies residues 143-156; it reads PAQAKENPADQPTT. The interval 157–183 is cys-rich copper-binding 5; the sequence is CGCQGVGVACTCPPGQCACDGCPAKAK.

It belongs to the metallothionein superfamily.

Its subcellular location is the cytoplasm. It localises to the cell cortex. Its function is as follows. Copper metallothionein that protects the cell against copper toxicity by tightly chelating copper ions. Required for antioxidant-mediated growth rescue in the presence of fluconazole. Acts as a critical factors for lung colonization and virulence. The chain is Copper metallothionein 2 from Cryptococcus neoformans var. grubii serotype A (strain H99 / ATCC 208821 / CBS 10515 / FGSC 9487) (Filobasidiella neoformans var. grubii).